Here is a 222-residue protein sequence, read N- to C-terminus: Sigma non-opioid intracellular receptor 1 (222 aa).

Over 1–7 (MGVAGPW) the chain is Lumenal. A helical transmembrane segment spans residues 8–29 (VLRVGLGLGAFALLLQGLRGWL). At 30 to 222 (ACKRYEFQPA…ASAFFSTLGC (193 aa)) the chain is on the cytoplasmic side. An important for ligand-binding region spans residues 98-105 (SLTEYVLL). Residues 176-222 (FVPSTLAFALADTLFSTQDFITLFYTLRAYTKGLLLEASAFFSTLGC) form a C-terminal hydrophobic region region.

It belongs to the ERG2 family. In terms of assembly, homotrimer.

The protein localises to the nucleus inner membrane. It localises to the nucleus outer membrane. It is found in the nucleus envelope. The protein resides in the cytoplasmic vesicle. Its subcellular location is the endoplasmic reticulum membrane. The protein localises to the membrane. Its function is as follows. May function in lipid transport from the endoplasmic reticulum and be involved in a wide array of cellular functions probably through regulation of the biogenesis of lipid microdomains at the plasma membrane. May regulate calcium efflux at the endoplasmic reticulum. This Gallus gallus (Chicken) protein is Sigma non-opioid intracellular receptor 1 (SIGMAR1).